The following is a 463-amino-acid chain: L-seryl-tRNA(Sec) selenium transferase (463 aa).

K295 is modified (N6-(pyridoxal phosphate)lysine).

This sequence belongs to the SelA family. Homodecamer; pentamer of dimers. Binds only one seryl-tRNA(Sec) per dimer. The cofactor is pyridoxal 5'-phosphate.

Its subcellular location is the cytoplasm. The enzyme catalyses L-seryl-tRNA(Sec) + selenophosphate + H(+) = L-selenocysteinyl-tRNA(Sec) + phosphate. The protein operates within aminoacyl-tRNA biosynthesis; selenocysteinyl-tRNA(Sec) biosynthesis; selenocysteinyl-tRNA(Sec) from L-seryl-tRNA(Sec) (bacterial route): step 1/1. Converts seryl-tRNA(Sec) to selenocysteinyl-tRNA(Sec) required for selenoprotein biosynthesis. This is L-seryl-tRNA(Sec) selenium transferase from Escherichia coli O6:H1 (strain CFT073 / ATCC 700928 / UPEC).